We begin with the raw amino-acid sequence, 861 residues long: Translation initiation factor IF-2 (861 aa).

Residues 107–272 (AQKQQDIQRA…QRKKKSKVVQ (166 aa)) form a disordered region. The segment covering 115–128 (RAAEEAAAKERETE) has biased composition (basic and acidic residues). Polar residues-rich tracts occupy residues 148–158 (SVQQEAANMDT) and 169–180 (VDESVSATTAGG). Basic and acidic residues predominate over residues 210-228 (NKEDSEVRREPADAEDLKR). Basic residues predominate over residues 260-269 (RARQRKKKSK). One can recognise a tr-type G domain in the interval 362-531 (SRAPVVSVMG…LLQSEMLELT (170 aa)). Residues 371 to 378 (GHVDHGKT) are G1. Position 371 to 378 (371 to 378 (GHVDHGKT)) interacts with GTP. Residues 396 to 400 (GITQH) form a G2 region. A G3 region spans residues 417–420 (DTPG). GTP contacts are provided by residues 417–421 (DTPGH) and 471–474 (NKMD). Residues 471–474 (NKMD) form a G4 region. Positions 507–509 (SAH) are G5.

It belongs to the TRAFAC class translation factor GTPase superfamily. Classic translation factor GTPase family. IF-2 subfamily.

It is found in the cytoplasm. Its function is as follows. One of the essential components for the initiation of protein synthesis. Protects formylmethionyl-tRNA from spontaneous hydrolysis and promotes its binding to the 30S ribosomal subunits. Also involved in the hydrolysis of GTP during the formation of the 70S ribosomal complex. This Hahella chejuensis (strain KCTC 2396) protein is Translation initiation factor IF-2.